A 383-amino-acid polypeptide reads, in one-letter code: UDP-N-acetylglucosamine--N-acetylmuramyl-(pentapeptide) pyrophosphoryl-undecaprenol N-acetylglucosamine transferase (383 aa).

Residues 11–13 (TGG), N125, R166, S191, I246, and Q291 contribute to the UDP-N-acetyl-alpha-D-glucosamine site. The disordered stretch occupies residues 364 to 383 (PNGRERTPIEAEKKAPRSNS). Residues 366-383 (GRERTPIEAEKKAPRSNS) are compositionally biased toward basic and acidic residues.

Belongs to the glycosyltransferase 28 family. MurG subfamily.

It localises to the cell inner membrane. The enzyme catalyses di-trans,octa-cis-undecaprenyl diphospho-N-acetyl-alpha-D-muramoyl-L-alanyl-D-glutamyl-meso-2,6-diaminopimeloyl-D-alanyl-D-alanine + UDP-N-acetyl-alpha-D-glucosamine = di-trans,octa-cis-undecaprenyl diphospho-[N-acetyl-alpha-D-glucosaminyl-(1-&gt;4)]-N-acetyl-alpha-D-muramoyl-L-alanyl-D-glutamyl-meso-2,6-diaminopimeloyl-D-alanyl-D-alanine + UDP + H(+). It participates in cell wall biogenesis; peptidoglycan biosynthesis. Its function is as follows. Cell wall formation. Catalyzes the transfer of a GlcNAc subunit on undecaprenyl-pyrophosphoryl-MurNAc-pentapeptide (lipid intermediate I) to form undecaprenyl-pyrophosphoryl-MurNAc-(pentapeptide)GlcNAc (lipid intermediate II). The chain is UDP-N-acetylglucosamine--N-acetylmuramyl-(pentapeptide) pyrophosphoryl-undecaprenol N-acetylglucosamine transferase from Myxococcus xanthus (strain DK1622).